A 287-amino-acid chain; its full sequence is Putative inactive carboxylesterase 4 (287 aa).

The first 18 residues, 1 to 18, serve as a signal peptide directing secretion; it reads MWLPALVLATLAASAAWA. A glycan (N-linked (GlcNAc...) asparagine) is linked at asparagine 80.

Belongs to the type-B carboxylesterase/lipase family. Expressed in placenta.

The protein resides in the secreted. In terms of biological role, has no esterase activity. The sequence is that of Putative inactive carboxylesterase 4 (CES1P1) from Homo sapiens (Human).